The chain runs to 910 residues: Dynein axonemal assembly factor 1 homolog (910 aa).

LRR repeat units follow at residues 43–64, 65–86, 87–108, 111–132, and 136–157; these read GLKC…DHQS, QLRC…QHCK, QLDT…GSDI, VLNT…AELR, and FVSV…KVLA. Positions 171–209 constitute an LRRCT domain; sequence PVVNDIPSYRKTLILECKSLTYLDSRPVFDKDRACAEAW. Over residues 217-230 the composition is skewed to basic and acidic residues; that stretch reads ERKEHQRWKKEEQR. Disordered stretches follow at residues 217 to 275, 297 to 332, 344 to 399, 620 to 642, 662 to 682, and 855 to 910; these read ERKE…GDFE, TKGD…DPTL, SRAC…GSIL, EQVP…PVDQ, QVEV…IPEE, and EELE…QGDH. Residues 314 to 331 are compositionally biased toward polar residues; the sequence is STNSVDYITGSDSNSDPT. Positions 380 to 389 are enriched in low complexity; it reads SLSDSSSSSS. A compositionally biased stretch (basic and acidic residues) spans 620–633; it reads EQVPDEVEANDKAS. Over residues 855–865 the composition is skewed to acidic residues; it reads EELEELNEEED. The segment covering 866–878 has biased composition (basic and acidic residues); the sequence is PALKEAGDFKHDE.

The protein belongs to the DNAAF1 family.

The protein localises to the cell projection. It localises to the cilium. Cilium-specific protein required for cilia structures. In Anopheles gambiae (African malaria mosquito), this protein is Dynein axonemal assembly factor 1 homolog.